A 154-amino-acid chain; its full sequence is 17 kDa surface antigen (154 aa).

Residues 1–19 (MKLLSKIMIIALAASMLQA) form the signal peptide. Cys20 carries N-palmitoyl cysteine lipidation. Cys20 is lipidated: S-diacylglycerol cysteine.

It belongs to the rickettsiale 17 kDa surface antigen family.

It is found in the cell outer membrane. This Rickettsia montanensis protein is 17 kDa surface antigen (omp).